Consider the following 194-residue polypeptide: Large ribosomal subunit protein bL9 (194 aa).

The segment at 167–194 is disordered; that stretch reads EDRAAEAEAASDMAAGGAGSFEGDHYES.

Belongs to the bacterial ribosomal protein bL9 family.

Its function is as follows. Binds to the 23S rRNA. The polypeptide is Large ribosomal subunit protein bL9 (Caulobacter sp. (strain K31)).